Reading from the N-terminus, the 491-residue chain is Sterol 14-alpha demethylase (491 aa).

The helical transmembrane segment at 20-40 (LWMLSTVALLSILVVSVVINV) threads the bilayer. C430 provides a ligand contact to heme.

The protein belongs to the cytochrome P450 family. Heme serves as cofactor.

The protein localises to the endoplasmic reticulum membrane. The enzyme catalyses a 14alpha-methyl steroid + 3 reduced [NADPH--hemoprotein reductase] + 3 O2 = a Delta(14) steroid + formate + 3 oxidized [NADPH--hemoprotein reductase] + 4 H2O + 4 H(+). The catalysed reaction is a 14alpha-methyl steroid + reduced [NADPH--hemoprotein reductase] + O2 = a 14alpha-hydroxymethyl steroid + oxidized [NADPH--hemoprotein reductase] + H2O + H(+). It carries out the reaction a 14alpha-hydroxymethyl steroid + reduced [NADPH--hemoprotein reductase] + O2 = a 14alpha-formyl steroid + oxidized [NADPH--hemoprotein reductase] + 2 H2O + H(+). It catalyses the reaction a 14alpha-formyl steroid + reduced [NADPH--hemoprotein reductase] + O2 = a Delta(14) steroid + formate + oxidized [NADPH--hemoprotein reductase] + H2O + 2 H(+). The enzyme catalyses lanosterol + 3 reduced [NADPH--hemoprotein reductase] + 3 O2 = 4,4-dimethyl-5alpha-cholesta-8,14,24-trien-3beta-ol + formate + 3 oxidized [NADPH--hemoprotein reductase] + 4 H2O + 4 H(+). The catalysed reaction is lanosterol + reduced [NADPH--hemoprotein reductase] + O2 = 32-hydroxylanosterol + oxidized [NADPH--hemoprotein reductase] + H2O + H(+). It carries out the reaction 32-hydroxylanosterol + reduced [NADPH--hemoprotein reductase] + O2 = 32-oxolanosterol + oxidized [NADPH--hemoprotein reductase] + 2 H2O + H(+). It catalyses the reaction 32-oxolanosterol + reduced [NADPH--hemoprotein reductase] + O2 = 4,4-dimethyl-5alpha-cholesta-8,14,24-trien-3beta-ol + formate + oxidized [NADPH--hemoprotein reductase] + H2O + 2 H(+). The enzyme catalyses eburicol + 3 reduced [NADPH--hemoprotein reductase] + 3 O2 = 14-demethyleburicol + formate + 3 oxidized [NADPH--hemoprotein reductase] + 4 H2O + 4 H(+). The catalysed reaction is eburicol + reduced [NADPH--hemoprotein reductase] + O2 = 32-hydroxyeburicol + oxidized [NADPH--hemoprotein reductase] + H2O + H(+). It carries out the reaction 32-hydroxyeburicol + reduced [NADPH--hemoprotein reductase] + O2 = 32-oxoeburicol + oxidized [NADPH--hemoprotein reductase] + 2 H2O + H(+). It catalyses the reaction 32-oxoeburicol + reduced [NADPH--hemoprotein reductase] + O2 = 14-demethyleburicol + formate + oxidized [NADPH--hemoprotein reductase] + H2O + 2 H(+). It participates in steroid biosynthesis; sterol biosynthesis. Its function is as follows. Sterol 14alpha-demethylase, encoded by cyp51A, cyp51B and cyp51C, that plays a critical role in the third module of ergosterol biosynthesis pathway, being ergosterol the major sterol component in fungal membranes that participates in a variety of functions. The third module or late pathway involves the ergosterol synthesis itself through consecutive reactions that mainly occur in the endoplasmic reticulum (ER) membrane. In filamentous fungi, during the initial step of this module, lanosterol (lanosta-8,24-dien-3beta-ol) can be metabolized to eburicol. Sterol 14alpha-demethylase catalyzes the three-step oxidative removal of the 14alpha-methyl group (C-32) of both these sterols in the form of formate, and converts eburicol and lanosterol to 14-demethyleburicol (4,4,24-trimethylergosta-8,14,24(28)-trienol) and 4,4-dimethyl-5alpha-cholesta-8,14,24-trien-3beta-ol, respectively, which are further metabolized by other enzymes in the pathway to ergosterol. Can also use substrates not intrinsic to fungi, such as 24,25-dihydrolanosterol (DHL), producing 4,4'-dimethyl-8,14-cholestadien-3-beta-ol, but at lower rates than the endogenous substrates. As a target of azole drugs, plays a crucial role in azole susceptibility. This is Sterol 14-alpha demethylase from Aspergillus flavus (strain ATCC 200026 / FGSC A1120 / IAM 13836 / NRRL 3357 / JCM 12722 / SRRC 167).